The primary structure comprises 733 residues: Ribosomal protein S6 kinase 2 alpha (733 aa).

Residues 18–38 (EDPENGHGSPEEGGRHTSKDE) are disordered. The 260-residue stretch at 62–321 (FVLLKVLGQG…AEEIKRQPFF (260 aa)) folds into the Protein kinase 1 domain. ATP-binding positions include 68 to 76 (LGQGSFGKV) and K94. The active-site Proton acceptor is the D187. S221 carries the post-translational modification Phosphoserine. Positions 322–391 (STIDWNKLFR…VAPALVEEDA (70 aa)) constitute an AGC-kinase C-terminal domain. The residue at position 359 (T359) is a Phosphothreonine. S363 carries the phosphoserine modification. Phosphoserine; by autocatalysis is present on S380. In terms of domain architecture, Protein kinase 2 spans 416–673 (YTVRETIGVG…AKQVLQHEWI (258 aa)). Residues 422–430 (IGVGSYSVC) and K445 contribute to the ATP site. D533 functions as the Proton acceptor in the catalytic mechanism. A Phosphothreonine modification is found at T571. S730 carries the phosphoserine modification.

This sequence belongs to the protein kinase superfamily. AGC Ser/Thr protein kinase family. S6 kinase subfamily. Mg(2+) is required as a cofactor. Autophosphorylated on Ser-380, as part of the activation process.

The catalysed reaction is L-seryl-[protein] + ATP = O-phospho-L-seryl-[protein] + ADP + H(+). The enzyme catalyses L-threonyl-[protein] + ATP = O-phospho-L-threonyl-[protein] + ADP + H(+). Activated by multiple phosphorylations on threonine and serine residues. Serine/threonine kinase that may play a role in mediating the growth-factor and stress induced activation of transcription. This Xenopus laevis (African clawed frog) protein is Ribosomal protein S6 kinase 2 alpha (rps6ka).